A 227-amino-acid polypeptide reads, in one-letter code: Ribonuclease 3 (227 aa).

The RNase III domain occupies 5–127; it reads YQKLSRRIGY…IIGAMYLDAG (123 aa). E40 serves as a coordination point for Mg(2+). Residue D44 is part of the active site. Residues D113 and E116 each contribute to the Mg(2+) site. Residue E116 is part of the active site. Positions 154-224 constitute a DRBM domain; that stretch reads DAKTRLQEFL…AAKALKKLEK (71 aa).

This sequence belongs to the ribonuclease III family. Homodimer. It depends on Mg(2+) as a cofactor.

It is found in the cytoplasm. The enzyme catalyses Endonucleolytic cleavage to 5'-phosphomonoester.. In terms of biological role, digests double-stranded RNA. Involved in the processing of primary rRNA transcript to yield the immediate precursors to the large and small rRNAs (23S and 16S). Processes some mRNAs, and tRNAs when they are encoded in the rRNA operon. Processes pre-crRNA and tracrRNA of type II CRISPR loci if present in the organism. The polypeptide is Ribonuclease 3 (Marinomonas sp. (strain MWYL1)).